Reading from the N-terminus, the 370-residue chain is Alpha-ketoglutarate-dependent dioxygenase cnsP (370 aa).

The segment covering 1–12 (MSTTTVITPGTI) has biased composition (low complexity). Residues 1–20 (MSTTTVITPGTITREKNENG) are disordered. H131 is a binding site for substrate. Positions 169 and 171 each coordinate Fe cation. T197 is a 2-oxoglutarate binding site. H321 contributes to the Fe cation binding site. 2-oxoglutarate is bound by residues R333 and R337. Substrate is bound at residue R337.

The protein belongs to the TfdA dioxygenase family. The cofactor is Fe(2+).

It participates in alkaloid biosynthesis. Alpha-ketoglutarate-dependent dioxygenase; part of the gene cluster that mediates the biosynthesis of communesins, a prominent class of indole alkaloids with great potential as pharmaceuticals. Communesins are biosynthesized by the coupling of tryptamine and aurantioclavine, two building blocks derived from L-tryptophan. The L-tryptophan decarboxylase cnsB converts L-tryptophan to tryptamine, whereas the tryptophan dimethylallyltransferase cnsF converts L-tryptophan to 4-dimethylallyl tryptophan which is further transformed to aurantioclavine by the aurantioclavine synthase cnsA, probably aided by the catalase cnsD. The cytochrome P450 monooxygenase cnsC catalyzes the heterodimeric coupling between the two different indole moieties, tryptamine and aurantioclavine, to construct vicinal quaternary stereocenters and yield the heptacyclic communesin scaffold. The O-methyltransferase cnsE then methylates the communesin scaffold to produce communesin K, the simplest characterized communesin that contains the heptacyclic core. The dioxygenase cnsJ converts communesin K into communesin I. Acylation to introduce the hexadienyl group at position N16 of communesin I by the acyltransferase cnsK leads to the production of communesin B. The hexadienyl group is produced by the highly reducing polyketide synthase cnsI, before being hydrolytically removed from cnsI by the serine hydrolase cnsH, converted into hexadienyl-CoA by the CoA ligase cnsG, and then transferred to communesin I by cnsK. Surprisingly, cnsK may also be a promiscuous acyltransferase that can tolerate a range of acyl groups, including acetyl-, propionyl-, and butyryl-CoA, which lead to communesins A, G and H respectively. The roles of the alpha-ketoglutarate-dependent dioxygenases cnsM and cnsP have still to be determined. The chain is Alpha-ketoglutarate-dependent dioxygenase cnsP from Penicillium expansum (Blue mold rot fungus).